Here is a 338-residue protein sequence, read N- to C-terminus: MNNAAEITVLGAGSYGTALAISLASNGHKTLLWGHDPKSMQVLAESRSNERFLPGIQFPDCLSIEADLGKALAASKNILVVVPSHVFGDVLKQAKPLLRDDARIVWATKGLEPETGRLLQDVAREQLGEHYPLAVLSGPTFAKELAAGLPTAISVAGTCPQFTHDLVELLHSPKRLRVYANDDFIGIQLGGAVKNVIAIGAGMSDGIGFGANARTALITRGLVELSRLGEAIGADASTFIGMAGLGDLVLTCTDNQSRNRRFGLALGQGKDVITAQEEIGQVVEGYRNTKEVFTLAKRLGVEMPITEQIYQVLYQGKAPVEAAKELLSRDKKSETLKK.

Positions 14, 15, 35, and 109 each coordinate NADPH. Sn-glycerol 3-phosphate contacts are provided by Lys-109, Gly-138, and Thr-140. Ala-142 is an NADPH binding site. Positions 194, 247, 257, 258, and 259 each coordinate sn-glycerol 3-phosphate. The Proton acceptor role is filled by Lys-194. Residue Arg-258 participates in NADPH binding. 2 residues coordinate NADPH: Val-282 and Glu-284.

Belongs to the NAD-dependent glycerol-3-phosphate dehydrogenase family.

It is found in the cytoplasm. The enzyme catalyses sn-glycerol 3-phosphate + NAD(+) = dihydroxyacetone phosphate + NADH + H(+). It carries out the reaction sn-glycerol 3-phosphate + NADP(+) = dihydroxyacetone phosphate + NADPH + H(+). Its pathway is membrane lipid metabolism; glycerophospholipid metabolism. Its function is as follows. Catalyzes the reduction of the glycolytic intermediate dihydroxyacetone phosphate (DHAP) to sn-glycerol 3-phosphate (G3P), the key precursor for phospholipid synthesis. The polypeptide is Glycerol-3-phosphate dehydrogenase [NAD(P)+] (Shewanella frigidimarina (strain NCIMB 400)).